The primary structure comprises 171 residues: Crossover junction endodeoxyribonuclease RuvC (171 aa).

Catalysis depends on residues Asp-11, Glu-71, and Asp-143. Mg(2+) is bound by residues Asp-11, Glu-71, and Asp-143.

The protein belongs to the RuvC family. In terms of assembly, homodimer which binds Holliday junction (HJ) DNA. The HJ becomes 2-fold symmetrical on binding to RuvC with unstacked arms; it has a different conformation from HJ DNA in complex with RuvA. In the full resolvosome a probable DNA-RuvA(4)-RuvB(12)-RuvC(2) complex forms which resolves the HJ. Requires Mg(2+) as cofactor.

It is found in the cytoplasm. It carries out the reaction Endonucleolytic cleavage at a junction such as a reciprocal single-stranded crossover between two homologous DNA duplexes (Holliday junction).. In terms of biological role, the RuvA-RuvB-RuvC complex processes Holliday junction (HJ) DNA during genetic recombination and DNA repair. Endonuclease that resolves HJ intermediates. Cleaves cruciform DNA by making single-stranded nicks across the HJ at symmetrical positions within the homologous arms, yielding a 5'-phosphate and a 3'-hydroxyl group; requires a central core of homology in the junction. The consensus cleavage sequence is 5'-(A/T)TT(C/G)-3'. Cleavage occurs on the 3'-side of the TT dinucleotide at the point of strand exchange. HJ branch migration catalyzed by RuvA-RuvB allows RuvC to scan DNA until it finds its consensus sequence, where it cleaves and resolves the cruciform DNA. This Chelativorans sp. (strain BNC1) protein is Crossover junction endodeoxyribonuclease RuvC.